Consider the following 309-residue polypeptide: Taste receptor type 2 member 31 (309 aa).

Topologically, residues 1 to 2 (MI) are extracellular. The chain crosses the membrane as a helical span at residues 3–23 (TFLPTIFSILVVVIFVIGNFG). Residues 24–55 (NGFIALVNSIEWVKRQKISFADQILTALAVSR) are Cytoplasmic-facing. The chain crosses the membrane as a helical span at residues 56–76 (VGLLWALLLNWYSTVFNPAFY). Over 77–100 (SVGVRTTVYDVWTVTGHFSNWLAT) the chain is Extracellular. A helical transmembrane segment spans residues 101–121 (SLSIFYLLKIANFSNLIFLHL). The Cytoplasmic segment spans residues 122–126 (KRRVK). The helical transmembrane segment at 127–147 (SVILVMLLGPLLFLACQLFVI) threads the bilayer. Over 148–181 (NMKEILRTKEYEGNMTWKIKLRSAMYLSDATITT) the chain is Extracellular. The N-linked (GlcNAc...) asparagine glycan is linked to asparagine 161. The chain crosses the membrane as a helical span at residues 182 to 202 (LANLVPFTLTLLSFLLLICSL). At 203 to 229 (CKHLNKMQLHGKGSQDPSTKVHIKVLQ) the chain is on the cytoplasmic side. Residues 230 to 250 (TVISFLLLCAIYFLSIMISVW) form a helical membrane-spanning segment. The Extracellular segment spans residues 251–259 (SFGSLENKP). The chain crosses the membrane as a helical span at residues 260 to 280 (VFMFCKAIRFSYPSIHPFILI). Residues 281–309 (WGNKKLKQTFLSVLRQVRYWVKGEKPSSP) are Cytoplasmic-facing.

The protein belongs to the G-protein coupled receptor T2R family.

It localises to the membrane. Receptor that may play a role in the perception of bitterness and is gustducin-linked. May play a role in sensing the chemical composition of the gastrointestinal content. The activity of this receptor may stimulate alpha gustducin, mediate PLC-beta-2 activation and lead to the gating of TRPM5. The polypeptide is Taste receptor type 2 member 31 (TAS2R31) (Pongo pygmaeus (Bornean orangutan)).